We begin with the raw amino-acid sequence, 326 residues long: Probable cell division protein WhiA (326 aa).

The H-T-H motif DNA-binding region spans 275–308 (SLDELGHHADPPMTKDAVAGRIRRLLAMADKKAV).

Belongs to the WhiA family.

Functionally, involved in cell division and chromosome segregation. This is Probable cell division protein WhiA from Clavibacter michiganensis subsp. michiganensis (strain NCPPB 382).